The following is a 246-amino-acid chain: Flagellar brake protein YcgR (246 aa).

A PilZ domain is found at 122–234 (QRREFFRIQT…PMETIIQRYV (113 aa)).

It belongs to the YcgR family. As to quaternary structure, monomer. Interacts with the flagellar basal bodies.

The protein resides in the bacterial flagellum basal body. Its function is as follows. Acts as a flagellar brake, regulating swimming and swarming in a bis-(3'-5') cyclic diguanylic acid (c-di-GMP)-dependent manner. Binds 1 c-di-GMP dimer per subunit. Increasing levels of c-di-GMP lead to decreased motility. This chain is Flagellar brake protein YcgR, found in Chromobacterium violaceum (strain ATCC 12472 / DSM 30191 / JCM 1249 / CCUG 213 / NBRC 12614 / NCIMB 9131 / NCTC 9757 / MK).